The chain runs to 206 residues: Venom allergen 5 2 (206 aa).

4 cysteine pairs are disulfide-bonded: cysteine 4–cysteine 16, cysteine 8–cysteine 104, cysteine 28–cysteine 96, and cysteine 172–cysteine 189. Positions 48-191 (DEHNRFRQKV…MKSHYLVCNY (144 aa)) constitute an SCP domain.

The protein belongs to the CRISP family. Venom allergen 5-like subfamily. Expressed by the venom gland.

It is found in the secreted. The protein is Venom allergen 5 2 of Polybia paulista (Neotropical social wasp).